A 200-amino-acid polypeptide reads, in one-letter code: dITP/XTP pyrophosphatase (200 aa).

8–13 contributes to the substrate binding site; it reads SQNSSK. Mg(2+) is bound by residues Glu40 and Asp69. Asp69 functions as the Proton acceptor in the catalytic mechanism. Substrate contacts are provided by residues Ser70, 154 to 157, Lys177, and 182 to 183; these read FGYD and HR.

It belongs to the HAM1 NTPase family. As to quaternary structure, homodimer. Mg(2+) serves as cofactor.

The catalysed reaction is XTP + H2O = XMP + diphosphate + H(+). The enzyme catalyses dITP + H2O = dIMP + diphosphate + H(+). It catalyses the reaction ITP + H2O = IMP + diphosphate + H(+). Its function is as follows. Pyrophosphatase that catalyzes the hydrolysis of nucleoside triphosphates to their monophosphate derivatives, with a high preference for the non-canonical purine nucleotides XTP (xanthosine triphosphate), dITP (deoxyinosine triphosphate) and ITP. Seems to function as a house-cleaning enzyme that removes non-canonical purine nucleotides from the nucleotide pool, thus preventing their incorporation into DNA/RNA and avoiding chromosomal lesions. This is dITP/XTP pyrophosphatase from Coxiella burnetii (strain RSA 493 / Nine Mile phase I).